Reading from the N-terminus, the 89-residue chain is Small ribosomal subunit protein uS17 (89 aa).

This sequence belongs to the universal ribosomal protein uS17 family. In terms of assembly, part of the 30S ribosomal subunit.

In terms of biological role, one of the primary rRNA binding proteins, it binds specifically to the 5'-end of 16S ribosomal RNA. This chain is Small ribosomal subunit protein uS17, found in Delftia acidovorans (strain DSM 14801 / SPH-1).